Reading from the N-terminus, the 147-residue chain is Ponticulin-like protein C4 (147 aa).

The first 20 residues, 1-20 (MKFTKSLLLLIVAVFASSNA), serve as a signal peptide directing secretion. Residue Asn118 is the site of GPI-like-anchor amidated asparagine attachment. A glycan (N-linked (GlcNAc...) asparagine) is linked at Asn118. The propeptide at 119 to 147 (SSESDSSDSTRIGASFALAAAALLSMIAL) is removed in mature form.

Belongs to the ponticulin family. The GPI-like-anchor contains a phosphoceramide group, rather than a phosphatidyl group.

The protein localises to the cell membrane. The protein is Ponticulin-like protein C4 (ponC4) of Dictyostelium discoideum (Social amoeba).